Reading from the N-terminus, the 619-residue chain is ETS-related transcription factor Elf-1 (619 aa).

Ser110, Ser163, Ser167, and Ser168 each carry phosphoserine. The tract at residues 158–199 is disordered; sequence EKYADSPGASSPEQPKRKKGRKTKPPRPDSPATTPNISVKKK. Basic residues predominate over residues 173 to 182; the sequence is KRKKGRKTKP. Ser187 bears the Phosphoserine mark. Position 190 is a phosphothreonine (Thr190). The ETS DNA-binding region spans 208–290; that stretch reads IYLWEFLLAL…EGQRLVYQFK (83 aa). Residues 300–366 form a disordered region; that stretch reads NDEDPSSSIE…DPVEVAQPSE (67 aa). Low complexity predominate over residues 305–321; that stretch reads SSSIESSDPSLSSSATS. Over residues 322 to 335 the composition is skewed to polar residues; that stretch reads NRNQTSRSRVSSSP. A Phosphoserine modification is found at Ser432. Residues 564–592 are disordered; the sequence is TLTQEVEKKESEDHLKENTEKTEQQPQPY. The span at 568–586 shows a compositional bias: basic and acidic residues; sequence EVEKKESEDHLKENTEKTE.

It belongs to the ETS family. As to quaternary structure, binds to the underphosphorylated form of RB. May interact with other transcription factors in order to regulate specific genes. Interacts with RUNX1. In fetal tissues, it is highly expressed in heart, lung liver and kidney, and weakly expressed in brain. In adult, it is highly expressed in pancreas, spleen, thymus and peripheral blood leukocytes, expressed at moderate levels in heart, placenta, lung, liver, skeletal muscle, kidney, prostate, ovary, small intestine and colon, and weakly expressed in brain and testis.

Its subcellular location is the nucleus. Functionally, transcription factor that activates the LYN and BLK promoters. Appears to be required for the T-cell-receptor-mediated trans activation of HIV-2 gene expression. Binds specifically to two purine-rich motifs in the HIV-2 enhancer. This is ETS-related transcription factor Elf-1 (ELF1) from Homo sapiens (Human).